The chain runs to 138 residues: Thyrotropin subunit beta (138 aa).

An N-terminal signal peptide occupies residues Met1 to Ser20. Disulfide bonds link Cys22–Cys72, Cys36–Cys87, Cys39–Cys125, Cys47–Cys103, Cys51–Cys105, and Cys108–Cys115. N-linked (GlcNAc...) asparagine glycosylation is present at Asn43. The propeptide occupies Leu133–Val138.

This sequence belongs to the glycoprotein hormones subunit beta family. In terms of assembly, heterodimer of a common alpha chain and a unique beta chain which confers biological specificity to thyrotropin, lutropin, follitropin and gonadotropin.

It localises to the secreted. Its function is as follows. Indispensable for the control of thyroid structure and metabolism. This chain is Thyrotropin subunit beta (TSHB), found in Homo sapiens (Human).